Consider the following 248-residue polypeptide: Ubiquinone biosynthesis O-methyltransferase (248 aa).

Arg-41, Gly-72, Asp-93, and Met-136 together coordinate S-adenosyl-L-methionine.

It belongs to the methyltransferase superfamily. UbiG/COQ3 family.

The enzyme catalyses a 3-demethylubiquinol + S-adenosyl-L-methionine = a ubiquinol + S-adenosyl-L-homocysteine + H(+). It catalyses the reaction a 3-(all-trans-polyprenyl)benzene-1,2-diol + S-adenosyl-L-methionine = a 2-methoxy-6-(all-trans-polyprenyl)phenol + S-adenosyl-L-homocysteine + H(+). The protein operates within cofactor biosynthesis; ubiquinone biosynthesis. O-methyltransferase that catalyzes the 2 O-methylation steps in the ubiquinone biosynthetic pathway. The chain is Ubiquinone biosynthesis O-methyltransferase from Sinorhizobium medicae (strain WSM419) (Ensifer medicae).